Reading from the N-terminus, the 545-residue chain is CTP synthase (545 aa).

Positions 1-265 (MSKYIFVTGG…DDLVVQNLGL (265 aa)) are amidoligase domain. Ser-13 contacts CTP. Ser-13 contributes to the UTP binding site. ATP contacts are provided by residues 14–19 (SLGKGA) and Asp-71. Mg(2+) contacts are provided by Asp-71 and Glu-139. CTP-binding positions include 146–148 (DIE), 186–191 (KTKPTQ), and Lys-222. UTP is bound by residues 186–191 (KTKPTQ) and Lys-222. The Glutamine amidotransferase type-1 domain maps to 290-541 (VIALVGKYVG…MRAAIAQRER (252 aa)). Gly-351 serves as a coordination point for L-glutamine. The active-site Nucleophile; for glutamine hydrolysis is the Cys-378. Residues 379–382 (LGMQ), Glu-402, and Arg-469 each bind L-glutamine. Active-site residues include His-514 and Glu-516.

Belongs to the CTP synthase family. Homotetramer.

The catalysed reaction is UTP + L-glutamine + ATP + H2O = CTP + L-glutamate + ADP + phosphate + 2 H(+). The enzyme catalyses L-glutamine + H2O = L-glutamate + NH4(+). It catalyses the reaction UTP + NH4(+) + ATP = CTP + ADP + phosphate + 2 H(+). The protein operates within pyrimidine metabolism; CTP biosynthesis via de novo pathway; CTP from UDP: step 2/2. With respect to regulation, allosterically activated by GTP, when glutamine is the substrate; GTP has no effect on the reaction when ammonia is the substrate. The allosteric effector GTP functions by stabilizing the protein conformation that binds the tetrahedral intermediate(s) formed during glutamine hydrolysis. Inhibited by the product CTP, via allosteric rather than competitive inhibition. In terms of biological role, catalyzes the ATP-dependent amination of UTP to CTP with either L-glutamine or ammonia as the source of nitrogen. Regulates intracellular CTP levels through interactions with the four ribonucleotide triphosphates. This chain is CTP synthase, found in Acidithiobacillus ferrooxidans (strain ATCC 23270 / DSM 14882 / CIP 104768 / NCIMB 8455) (Ferrobacillus ferrooxidans (strain ATCC 23270)).